A 466-amino-acid chain; its full sequence is Pyruvate kinase (466 aa).

Arg32 provides a ligand contact to substrate. Residues Asn34, Ser36, and Asp66 each coordinate K(+). ATP is bound at residue 34–37; it reads NTSH. Arg73 provides a ligand contact to ATP. Residue Glu219 participates in Mg(2+) binding. Positions 242, 243, and 275 each coordinate substrate. A Mg(2+)-binding site is contributed by Asp243.

It belongs to the pyruvate kinase family. Homotetramer. The cofactor is a divalent metal cation.

The catalysed reaction is pyruvate + ATP = phosphoenolpyruvate + ADP + H(+). It functions in the pathway carbohydrate degradation; glycolysis; pyruvate from D-glyceraldehyde 3-phosphate: step 5/5. With respect to regulation, allosterically activated by AMP and inhibited by ATP. This chain is Pyruvate kinase (pyk), found in Thermotoga maritima (strain ATCC 43589 / DSM 3109 / JCM 10099 / NBRC 100826 / MSB8).